Reading from the N-terminus, the 141-residue chain is 3-hydroxyacyl-[acyl-carrier-protein] dehydratase FabZ (141 aa).

His-48 is a catalytic residue.

The protein belongs to the thioester dehydratase family. FabZ subfamily.

It localises to the cytoplasm. It carries out the reaction a (3R)-hydroxyacyl-[ACP] = a (2E)-enoyl-[ACP] + H2O. Its function is as follows. Involved in unsaturated fatty acids biosynthesis. Catalyzes the dehydration of short chain beta-hydroxyacyl-ACPs and long chain saturated and unsaturated beta-hydroxyacyl-ACPs. The polypeptide is 3-hydroxyacyl-[acyl-carrier-protein] dehydratase FabZ (Bacillus subtilis (strain 168)).